A 385-amino-acid chain; its full sequence is DNA replication and repair protein RecF (385 aa).

30-37 (GSNGFGKT) contacts ATP.

It belongs to the RecF family.

The protein resides in the cytoplasm. In terms of biological role, the RecF protein is involved in DNA metabolism; it is required for DNA replication and normal SOS inducibility. RecF binds preferentially to single-stranded, linear DNA. It also seems to bind ATP. The sequence is that of DNA replication and repair protein RecF from Mycobacterium avium (strain 104).